The chain runs to 257 residues: NH(3)-dependent NAD(+) synthetase (257 aa).

Residue G32–S39 participates in ATP binding. D38 contributes to the Mg(2+) binding site. A deamido-NAD(+)-binding site is contributed by R113. T133 contributes to the ATP binding site. E138 is a Mg(2+) binding site. Residues K162 and S184 each coordinate ATP.

It belongs to the NAD synthetase family. In terms of assembly, homodimer.

The catalysed reaction is deamido-NAD(+) + NH4(+) + ATP = AMP + diphosphate + NAD(+) + H(+). The protein operates within cofactor biosynthesis; NAD(+) biosynthesis; NAD(+) from deamido-NAD(+) (ammonia route): step 1/1. Its function is as follows. Catalyzes the ATP-dependent amidation of deamido-NAD to form NAD. Uses ammonia as a nitrogen source. The polypeptide is NH(3)-dependent NAD(+) synthetase (Wolinella succinogenes (strain ATCC 29543 / DSM 1740 / CCUG 13145 / JCM 31913 / LMG 7466 / NCTC 11488 / FDC 602W) (Vibrio succinogenes)).